The primary structure comprises 3898 residues: Genome polyprotein (3898 aa).

Residues 1–168 (MELITNELLY…LDCPLWVTSC (168 aa)) enclose the Peptidase C53 domain. Disordered regions lie at residues 47-72 (LPHK…CRSG), 172-209 (KEEG…KPPD), and 223-245 (KKGK…KPPE). Active-site for N-terminal protease activity residues include H49 and C69. Basic and acidic residues predominate over residues 172-207 (KEEGATKKKQQKPDRLEKGRMKIVPKESEKDSKTKP). N-linked (GlcNAc...) asparagine; by host glycosylation is found at N272, N281, N296, and N335. Intrachain disulfides connect C308/C352 and C338/C339. Residues H344, E345, K348, and H349 each act as for E(rns) glycoprotein RNase activity in the active site. N-linked (GlcNAc...) asparagine; by host glycans are attached at residues N365 and N370. 2 cysteine pairs are disulfide-bonded: C380–C425 and C384–C408. Residues N413, N487, and N597 are each glycosylated (N-linked (GlcNAc...) asparagine; by host). Residues 498–666 (ASPYCDVDRK…WNAATTTAFL (169 aa)) lie on the Lumenal side of the membrane. Residues 667–687 (VCLIKMVRGQVVQGILWLLLI) traverse the membrane as a helical segment. The Lumenal segment spans residues 688 to 1035 (TGVQGHLDCK…DHHRDYFAES (348 aa)). Disulfide bonds link C696-C740 and C751-C798. 4 N-linked (GlcNAc...) asparagine; by host glycosylation sites follow: N809, N878, N922, and N990. The next 8 membrane-spanning stretches (helical) occupy residues 1036 to 1056 (ILVV…LVTY), 1079 to 1099 (NLLT…YLLL), 1108 to 1128 (VLLL…VILL), 1144 to 1164 (LGQI…LIIA), 1189 to 1209 (PGVD…SYVT), 1217 to 1237 (WLQC…LIHL), 1247 to 1267 (IPNW…TVVT), and 1281 to 1301 (VPIL…ILIL). N-linked (GlcNAc...) asparagine; by host glycosylation occurs at N1357. The chain crosses the membrane as a helical span at residues 1360–1380 (MLLPLVRATLISCVSSKWQLI). Residue N1419 is glycosylated (N-linked (GlcNAc...) asparagine; by host). The Peptidase C74 domain occupies 1441-1589 (RNLIIKHKVR…DLEHLGWILR (149 aa)). H1447 acts as the For cysteine protease NS2 activity in catalysis. An N-linked (GlcNAc...) asparagine; by host glycan is attached at N1451. Residues E1461 and C1512 each act as for cysteine protease NS2 activity in the active site. A helical membrane pass occupies residues 1568–1588 (MLMVGNLGEEVGDLEHLGWIL). Residues 1590 to 1763 (GPAVCKKITE…LPIFEASSGR (174 aa)) enclose the Peptidase S31 domain. Catalysis depends on charge relay system; for serine protease NS3 activity residues H1658 and D1695. Residue N1713 is glycosylated (N-linked (GlcNAc...) asparagine; by host). S1752 functions as the Charge relay system; for serine protease NS3 activity in the catalytic mechanism. One can recognise a Helicase ATP-binding domain in the interval 1802–1960 (ITSMNRGDFK…QKHPIEEFIA (159 aa)). 1815-1822 (LATGAGKT) contributes to the ATP binding site. Positions 1910–1913 (DEYH) match the DEAH box motif. Residues 1978–2143 (GLKIPVDEMK…NVTKSFREMN (166 aa)) form the Helicase C-terminal domain. N2134, N2217, N2494, N2682, N2751, N2891, and N2988 each carry an N-linked (GlcNAc...) asparagine; by host glycan. GTP-binding residues include T3499 and L3501. In terms of domain architecture, RdRp catalytic spans 3518-3641 (PVAVSFDTKA…ITEKGLGLKF (124 aa)). Residue N3688 is glycosylated (N-linked (GlcNAc...) asparagine; by host). The GTP site is built by R3696 and K3704. 2 N-linked (GlcNAc...) asparagine; by host glycosylation sites follow: N3777 and N3793.

The protein belongs to the pestivirus polyprotein family. As to quaternary structure, homodimer; disulfide-linked. Homodimer; disulfide-linked. Heterodimer with E1; disulfide-linked. In terms of assembly, interacts with host IFIH1/MDA5; this interaction is involved in the inhibition of IFN-beta production. Post-translationally, heavily glycosylated. In terms of processing, the viral RNA of pestiviruses is expressed as a single polyprotein which undergoes post-translational proteolytic processing resulting in the production of at least eleven individual proteins. The N-terminal protease cleaves itself from the nascent polyprotein autocatalytically and thereby generates the N-terminus of the adjacent viral capsid protein C. Cleavage between E2 and p7 is partial.

It is found in the virion. Its subcellular location is the host membrane. The protein resides in the virion membrane. It localises to the host endoplasmic reticulum membrane. The protein localises to the host cytoplasm. It carries out the reaction Leu is conserved at position P1 for all four cleavage sites. Alanine is found at position P1' of the NS4A-NS4B cleavage site, whereas serine is found at position P1' of the NS3-NS4A, NS4B-NS5A and NS5A-NS5B cleavage sites.. It catalyses the reaction RNA(n) + a ribonucleoside 5'-triphosphate = RNA(n+1) + diphosphate. The catalysed reaction is a ribonucleoside 5'-triphosphate + H2O = a ribonucleoside 5'-diphosphate + phosphate + H(+). The enzyme catalyses ATP + H2O = ADP + phosphate + H(+). It carries out the reaction a ribonucleotidyl-ribonucleotide-RNA + H2O = a 3'-end 3'-phospho-ribonucleotide-RNA + a 5'-end dephospho-ribonucleoside-RNA + H(+). It catalyses the reaction a ribonucleotidyl-ribonucleotide-RNA = a 3'-end 2',3'-cyclophospho-ribonucleotide-RNA + a 5'-end dephospho-ribonucleoside-RNA. The catalysed reaction is a 3'-end 2',3'-cyclophospho-ribonucleotide-RNA + H2O = a 3'-end 3'-phospho-ribonucleotide-RNA + H(+). Inhibited by Zn(2+), which binds the catalytic site. Its function is as follows. Leader cysteine autoprotease that cleaves itself from the nascent polyprotein during translation of the viral mRNA. Once released, plays a role in the inhibition of host innate immune response by interacting with host IRF3 and inducing its proteasomal degradation. Packages viral RNA to form a viral nucleocapsid and thereby protects viral RNA. Also plays a role in transcription regulation. Protects the incoming virus against IFN-induced effectors. Functionally, initial binding to target cell probably involves interaction of E(rns) with glycosaminoglycans. Also possesses intrinsic ribonuclease (RNase) activity that can inhibit the production of type I interferon and assist in the development of persistent infections. In terms of biological role, E1 and/or E2 are probably responsible of cell attachment with CD46 and subsequent fusion after internalization of the virion by endocytosis. Its function is as follows. E1 and/or E2 are probably responsible of cell attachment with CD46 and subsequent fusion after internalization of the virion by endocytosis. Probably functions as a coeffector of fusion providing structural integrity to the fusion complex and possibly controlling exposure of the fusion motif in E1. Plays an essential role in the virus replication cycle by acting as a viroporin. Forms ion conductive pores, which alters the cell permeability allowing the transport of ions and other small molecules. Forms a leader sequence to properly orient NS2 in the membrane. Functionally, uncleaved NS2-3 is required for production of infectious virus. In terms of biological role, plays a role in the regulation of viral RNA replication. Its function is as follows. Multifunctional protein that contains an N-terminal protease and a C-terminal helicase, playing essential roles in viral polyprotein processing and viral genome replication. The chymotrypsin-like serine protease activity utilizes NS4A as an essential cofactor and catalyzes the cleavage of the polyprotein leading to the release of NS4A, NS4B, NS5A, and NS5B. Interacts with NS5B to enhance RNA-dependent RNA polymerase activity. Acts as a cofactor for the NS3 protease activity. Functionally, induces a specific membrane alteration that serves as a scaffold for the virus replication complex. Plays a role in the inhibition of host innate immune response by inhibiting RIGI/IFIH1-mediated IFN-beta production. In terms of biological role, replicates the viral (+) and (-) genome. Initiates the primer-independent RNA replication via a de novo mechanism requiring GTP. The sequence is that of Genome polyprotein from Bos taurus (Bovine).